The chain runs to 267 residues: Ribosomal RNA small subunit methyltransferase A (267 aa).

Positions 18, 20, 45, 66, 91, and 112 each coordinate S-adenosyl-L-methionine.

This sequence belongs to the class I-like SAM-binding methyltransferase superfamily. rRNA adenine N(6)-methyltransferase family. RsmA subfamily.

The protein localises to the cytoplasm. It catalyses the reaction adenosine(1518)/adenosine(1519) in 16S rRNA + 4 S-adenosyl-L-methionine = N(6)-dimethyladenosine(1518)/N(6)-dimethyladenosine(1519) in 16S rRNA + 4 S-adenosyl-L-homocysteine + 4 H(+). Functionally, specifically dimethylates two adjacent adenosines (A1518 and A1519) in the loop of a conserved hairpin near the 3'-end of 16S rRNA in the 30S particle. May play a critical role in biogenesis of 30S subunits. The chain is Ribosomal RNA small subunit methyltransferase A from Shewanella denitrificans (strain OS217 / ATCC BAA-1090 / DSM 15013).